Consider the following 284-residue polypeptide: MAATILQGKEVAQSIRAELANEVVELKKQGVVPGLTVVIVGDDPASHSYVRGKAKGCEEVGISSEIIRKDADITEEELLVIIQQLNENPNVNGILVQLPLPAHISEHAVIEAIAPEKDVDGFHPISIGNMVLGNDTMLPCTPHGIIELIKRTGTQMAGKHAVVIGRSNIVGKPVSLLLQQENATVTMCHSRTQNLEEYTQKADILVVATGRAHMIGKEHVKPGAVVIDVGVNRIETGKLVGDVKFDEVKDVASFITPVPGGVGPMTITMLLKNTVAAAKKQAKQ.

Residues 165-167 (GRS), S190, and V231 each bind NADP(+).

The protein belongs to the tetrahydrofolate dehydrogenase/cyclohydrolase family. Homodimer.

It carries out the reaction (6R)-5,10-methylene-5,6,7,8-tetrahydrofolate + NADP(+) = (6R)-5,10-methenyltetrahydrofolate + NADPH. It catalyses the reaction (6R)-5,10-methenyltetrahydrofolate + H2O = (6R)-10-formyltetrahydrofolate + H(+). Its pathway is one-carbon metabolism; tetrahydrofolate interconversion. Its function is as follows. Catalyzes the oxidation of 5,10-methylenetetrahydrofolate to 5,10-methenyltetrahydrofolate and then the hydrolysis of 5,10-methenyltetrahydrofolate to 10-formyltetrahydrofolate. This chain is Bifunctional protein FolD, found in Brevibacillus brevis (strain 47 / JCM 6285 / NBRC 100599).